The primary structure comprises 258 residues: Clathrin light chain 3 (258 aa).

Over residues 1–18 (MSSTLSNEESGLGDSNRS) the composition is skewed to polar residues. The disordered stretch occupies residues 1-96 (MSSTLSNEES…PPPSAMEKEE (96 aa)). Residue Ser2 is modified to N-acetylserine. The span at 34-50 (SRFQSQRFDSSFSNFDS) shows a compositional bias: low complexity. Residues 66 to 79 (RPETQSPPSINSFD) show a composition bias toward polar residues. Residues 90–152 (SAMEKEEGFA…TIENNKKLNR (63 aa)) form an involved in binding clathrin heavy chain region. Residues 105-164 (RLNALRLEEKEKEEKEMVQQILEAAEQYKAEFYSKRNVTIENNKKLNREKEKFFLENQEK) are a coiled coil. Residues 224–234 (LKHNPPTHMKP) are compositionally biased toward basic residues. The segment at 224–258 (LKHNPPTHMKPKLPSPSGADPNVSVSEQVTVTEKL) is disordered. The segment covering 246–258 (VSVSEQVTVTEKL) has biased composition (polar residues).

Belongs to the clathrin light chain family. As to quaternary structure, clathrin coats are formed from molecules containing 3 heavy chains and 3 light chains.

The protein resides in the cytoplasmic vesicle membrane. The protein localises to the membrane. It localises to the coated pit. Clathrin is the major protein of the polyhedral coat of coated pits and vesicles. This chain is Clathrin light chain 3, found in Arabidopsis thaliana (Mouse-ear cress).